The sequence spans 262 residues: Adenosylcobinamide-GDP ribazoletransferase (262 aa).

A run of 6 helical transmembrane segments spans residues Tyr-43–Gln-63, Leu-66–Phe-86, Gly-120–Leu-140, Ala-146–Phe-166, Leu-191–Leu-211, and Ala-242–Leu-262.

This sequence belongs to the CobS family. It depends on Mg(2+) as a cofactor.

The protein localises to the cell inner membrane. The catalysed reaction is alpha-ribazole + adenosylcob(III)inamide-GDP = adenosylcob(III)alamin + GMP + H(+). It carries out the reaction alpha-ribazole 5'-phosphate + adenosylcob(III)inamide-GDP = adenosylcob(III)alamin 5'-phosphate + GMP + H(+). It participates in cofactor biosynthesis; adenosylcobalamin biosynthesis; adenosylcobalamin from cob(II)yrinate a,c-diamide: step 7/7. Joins adenosylcobinamide-GDP and alpha-ribazole to generate adenosylcobalamin (Ado-cobalamin). Also synthesizes adenosylcobalamin 5'-phosphate from adenosylcobinamide-GDP and alpha-ribazole 5'-phosphate. The chain is Adenosylcobinamide-GDP ribazoletransferase from Shewanella baltica (strain OS185).